A 446-amino-acid polypeptide reads, in one-letter code: MEKYLSVTTLTKYLKMKFDKDPYLERVYLTGQVSNFRKRPTHQYFSLKDDHAVIQATIWSGIYQKLGFDLEEGMKINVIGRVQVYEPSGNYSIIIEKAEPDGVGALAIQFEQLKKKLTEEGLFQERFKQALPQFSKRIGVVTSRSGAVIRDIITTVSRRFPGVDILLYPTKVQGEGAAEEIARNIARANQRDDLDLLIIGRGGGSIEDLWAFNEEIVVRAIFESRLPVISSVGHETDVTLADFVADRRAATPTAAAELATPVTKLDVLAHLQNQEKRMVTAVRNVLSKKQEALKKCSQSVIFRQPERLYDGYLQRLDQLQLRLKQSLRTRISDNKQLVQARTHQLVQLSPVTKIQRYQDRLGQLDKLLGSQMALVYDAKVAEAKRLSEALLMLDTSRIVARGYAIVKKEESVVDSVESLKKKDQVTLLMRDGQVELEVKDVKTKEI.

It belongs to the XseA family. Heterooligomer composed of large and small subunits.

The protein localises to the cytoplasm. The catalysed reaction is Exonucleolytic cleavage in either 5'- to 3'- or 3'- to 5'-direction to yield nucleoside 5'-phosphates.. Bidirectionally degrades single-stranded DNA into large acid-insoluble oligonucleotides, which are then degraded further into small acid-soluble oligonucleotides. This is Exodeoxyribonuclease 7 large subunit from Streptococcus pneumoniae (strain Taiwan19F-14).